The chain runs to 84 residues: Esculentin-1ISb (84 aa).

A signal peptide spans 1–22 (MFTLKKPLLLIVLLGIISLSLC). Residues 23-36 (EQERAADEDEGTKI) constitute a propeptide, removed in mature form. Cysteine 78 and cysteine 84 are disulfide-bonded.

Expressed by the skin glands.

It localises to the secreted. Has antimicrobial activity against Gram-negative bacterium E.coli ATCC 8739 (MIC=3.1 ug), against Gram positive bacteria S.aureus ATCC 6538 (MIC=3.1 ug), methicillin-resistant S.aureus ATCC 43300 (MIC=12.5 ug), B.subtilis ATCC 6633 (MIC=12.5 ug) and against fungus C.albicans ATCC 90028 (MIC=50 ug). In Odorrana ishikawae (Ishikawa's frog), this protein is Esculentin-1ISb.